A 594-amino-acid chain; its full sequence is Proteasome-associated ATPase (594 aa).

Residues 20 to 98 (DDLAAQVTYL…KEEIDRLAQP (79 aa)) adopt a coiled-coil conformation. An ATP-binding site is contributed by 282–287 (GCGKTL). Positions 593-594 (YL) are docks into pockets in the proteasome alpha-ring.

It belongs to the AAA ATPase family. As to quaternary structure, homohexamer. Assembles into a hexameric ring structure that caps the 20S proteasome core. Strongly interacts with the prokaryotic ubiquitin-like protein Pup through a hydrophobic interface; the interacting region of ARC lies in its N-terminal coiled-coil domain. There is one Pup binding site per ARC hexamer ring. Upon ATP-binding, the C-terminus of ARC interacts with the alpha-rings of the proteasome core, possibly by binding to the intersubunit pockets.

It participates in protein degradation; proteasomal Pup-dependent pathway. Its function is as follows. ATPase which is responsible for recognizing, binding, unfolding and translocation of pupylated proteins into the bacterial 20S proteasome core particle. May be essential for opening the gate of the 20S proteasome via an interaction with its C-terminus, thereby allowing substrate entry and access to the site of proteolysis. Thus, the C-termini of the proteasomal ATPase may function like a 'key in a lock' to induce gate opening and therefore regulate proteolysis. The sequence is that of Proteasome-associated ATPase from Catenulispora acidiphila (strain DSM 44928 / JCM 14897 / NBRC 102108 / NRRL B-24433 / ID139908).